An 863-amino-acid chain; its full sequence is MQEQYLPSEIEAKVQQHWQDTKTFEVTEDESKEKFYCLSMFPYPSGRLHMGHVRNYTIGDVVARYQRLQGKNVLQPIGWDSFGLPAENAAINNKTAPAPWTYENIDYMKNQLKMLGFGYDWSREIATCTPEYYRWEQWFFTKLYEKGLVYKKTASVNWCPNDETVLANEQVQDGCCWRCDTQVVQKEIPQWFIKITDYAEELLNDIDQLDEWPEQVKTMQRNWIGRSEGIEMTFQVEGSDQSFDIYTTRPDTVMGVTYVAIAAGHPLAQQAAENNPVLAEFIEECKNADTTEAAMAAMEKKGVDTGLKAIHPLTGKLVPIWAANFVLMNYGTGAVMSVPGHDQRDYEFATKYGLPIVGVIKPADGELDISEEAYTEKGILFNSGDSFPELDGLDFQAAFDAIDAKLSSEGKGKRQVNYRLRDWGVSRQRYWGAPIPMVTLADGTVMPTPEDQLPVILPEDVVMDGIQSPIKADKEWAKTQVNGQEAFRETDTFDTFMESSWYYARYCSPKADQMLDPAKANYWLPVDQYIGGIEHACMHLLYFRFFHKLLRDIGLVNSDEPAKRLLTQGMVLADAFYYTDDKGARVWVSPNDAKVTETDDKGRIVKAVDSQGHELVYTGMSKMSKSKNNGIDPQEMVDKYGADTVRLFMMFASPPELTLEWQESSVEGAHRFIKRLWKLAHDHVSQGPTVALNVASLDSAQKELRRELHKTIAKVGDDIERRQMFNTAIASVMELMNRLQKAPMESEQDRALMQEALCAVVRLLYPIIPHTSFELWQALGHEETIENVLWPVVDESALVEDSKLIIVQVNGKLRAKVTVAADADKDTVEAAGMAEEGVIKHTEGKTVRKVIYVPGKLLNIVAN.

A 'HIGH' region motif is present at residues Pro42 to His52. The 'KMSKS' region signature appears at Lys622–Ser626. Lys625 lines the ATP pocket.

Belongs to the class-I aminoacyl-tRNA synthetase family.

It is found in the cytoplasm. The enzyme catalyses tRNA(Leu) + L-leucine + ATP = L-leucyl-tRNA(Leu) + AMP + diphosphate. The chain is Leucine--tRNA ligase from Shewanella loihica (strain ATCC BAA-1088 / PV-4).